The primary structure comprises 223 residues: MOB kinase activator-like 4 (223 aa).

A disordered region spans residues Met1 to Asp21. Zn(2+) is bound by residues Cys92, Cys97, His169, and His174.

Belongs to the MOB1/phocein family.

This Drosophila melanogaster (Fruit fly) protein is MOB kinase activator-like 4 (Mob4).